Here is a 336-residue protein sequence, read N- to C-terminus: Protein-arginine kinase (336 aa).

Residues 22 to 245 (IVMSSRIRLA…QQIINEEMQI (224 aa)) enclose the Phosphagen kinase C-terminal domain. ATP contacts are provided by residues 25 to 29 (SSRIR), His-83, Arg-116, 167 to 171 (RASVM), and 198 to 203 (RGIYGE).

This sequence belongs to the ATP:guanido phosphotransferase family.

It carries out the reaction L-arginyl-[protein] + ATP = N(omega)-phospho-L-arginyl-[protein] + ADP + H(+). Functionally, catalyzes the specific phosphorylation of arginine residues in proteins. This Staphylococcus saprophyticus subsp. saprophyticus (strain ATCC 15305 / DSM 20229 / NCIMB 8711 / NCTC 7292 / S-41) protein is Protein-arginine kinase.